The primary structure comprises 522 residues: Ribonuclease Y (522 aa).

Residues 7 to 27 (STILYCLFFFFLGIAAVLAFI) traverse the membrane as a helical segment. The region spanning 212-272 (TTSTVGVPTD…VRREVARMSL (61 aa)) is the KH domain. The 94-residue stretch at 338–431 (VLRHSVEVAF…VATADACSAS (94 aa)) folds into the HD domain.

Belongs to the RNase Y family.

The protein localises to the cell membrane. In terms of biological role, endoribonuclease that initiates mRNA decay. The sequence is that of Ribonuclease Y from Rhodopirellula baltica (strain DSM 10527 / NCIMB 13988 / SH1).